The sequence spans 622 residues: UvrABC system protein C (622 aa).

The GIY-YIG domain maps to 13–92; that stretch reads EKPGVYLMKN…IKKYRPKYNI (80 aa). One can recognise a UVR domain in the interval 204–239; sequence KDILDKLKNQMEEASNSLQFEKAASLRDKIFAVKKI.

This sequence belongs to the UvrC family. Interacts with UvrB in an incision complex.

It localises to the cytoplasm. In terms of biological role, the UvrABC repair system catalyzes the recognition and processing of DNA lesions. UvrC both incises the 5' and 3' sides of the lesion. The N-terminal half is responsible for the 3' incision and the C-terminal half is responsible for the 5' incision. The protein is UvrABC system protein C of Clostridium tetani (strain Massachusetts / E88).